Consider the following 336-residue polypeptide: Dihydroorotate dehydrogenase (quinone) (336 aa).

FMN contacts are provided by residues 62 to 66 (AGLDK) and threonine 86. Substrate is bound at residue lysine 66. 111 to 115 (NRMGF) contacts substrate. FMN-binding residues include asparagine 139 and asparagine 172. Asparagine 172 serves as a coordination point for substrate. Catalysis depends on serine 175, which acts as the Nucleophile. Asparagine 177 contacts substrate. Positions 217 and 245 each coordinate FMN. 246–247 (NT) contributes to the substrate binding site. FMN is bound by residues glycine 268, glycine 297, and 318-319 (YS).

Belongs to the dihydroorotate dehydrogenase family. Type 2 subfamily. As to quaternary structure, monomer. Requires FMN as cofactor.

The protein resides in the cell membrane. The catalysed reaction is (S)-dihydroorotate + a quinone = orotate + a quinol. It participates in pyrimidine metabolism; UMP biosynthesis via de novo pathway; orotate from (S)-dihydroorotate (quinone route): step 1/1. Functionally, catalyzes the conversion of dihydroorotate to orotate with quinone as electron acceptor. This Salmonella agona (strain SL483) protein is Dihydroorotate dehydrogenase (quinone).